A 193-amino-acid polypeptide reads, in one-letter code: Ubiquitin-conjugating enzyme E2 E1 (193 aa).

Residues 1–45 are disordered; that stretch reads MSDDDSRASTSSSSSSSSNQQTEKETNTPKKKESKVSMSKNSKLL. The residue at position 2 (Ser-2) is an N-acetylserine. A compositionally biased stretch (low complexity) spans 8–18; sequence ASTSSSSSSSS. A compositionally biased stretch (basic and acidic residues) spans 22-35; that stretch reads TEKETNTPKKKESK. A compositionally biased stretch (polar residues) spans 36 to 45; the sequence is VSMSKNSKLL. In terms of domain architecture, UBC core spans 47–193; that stretch reads TSAKRIQKEL…ARQWTKRYAT (147 aa). The Glycyl thioester intermediate role is filled by Cys-131. A Glycyl lysine isopeptide (Lys-Gly) (interchain with G-Cter in ISG15) cross-link involves residue Lys-136.

This sequence belongs to the ubiquitin-conjugating enzyme family. Interacts with RNF14. ISGylation suppresses ubiquitin E2 enzyme activity. Post-translationally, autoubiquitinated in vitro.

It localises to the nucleus. The enzyme catalyses S-ubiquitinyl-[E1 ubiquitin-activating enzyme]-L-cysteine + [E2 ubiquitin-conjugating enzyme]-L-cysteine = [E1 ubiquitin-activating enzyme]-L-cysteine + S-ubiquitinyl-[E2 ubiquitin-conjugating enzyme]-L-cysteine.. It carries out the reaction S-ubiquitinyl-[E1 ubiquitin-activating enzyme]-L-cysteine + [acceptor protein]-L-lysine = [E1 ubiquitin-activating enzyme]-L-cysteine + N(6)-monoubiquitinyl-[acceptor protein]-L-lysine.. It participates in protein modification; protein ubiquitination. In terms of biological role, accepts ubiquitin from the E1 complex and catalyzes its covalent attachment to other proteins. Catalyzes the covalent attachment of ISG15 to other proteins. Mediates the selective degradation of short-lived and abnormal proteins. In vitro also catalyzes 'Lys-48'-linked polyubiquitination. Catalyzes monoubiquitination of other proteins in both an E3-dependent and E3-independent manner. The sequence is that of Ubiquitin-conjugating enzyme E2 E1 from Homo sapiens (Human).